Consider the following 323-residue polypeptide: Fructose-1,6-bisphosphatase class 1 (323 aa).

Residues Glu-90, Asp-111, Leu-113, and Asp-114 each contribute to the Mg(2+) site. Residues Asp-114 to Ser-117, Tyr-222, and Lys-253 each bind substrate. Position 259 (Glu-259) interacts with Mg(2+).

It belongs to the FBPase class 1 family. As to quaternary structure, homotetramer. The cofactor is Mg(2+).

It is found in the cytoplasm. It carries out the reaction beta-D-fructose 1,6-bisphosphate + H2O = beta-D-fructose 6-phosphate + phosphate. It participates in carbohydrate biosynthesis; gluconeogenesis. The polypeptide is Fructose-1,6-bisphosphatase class 1 (Pelobacter propionicus (strain DSM 2379 / NBRC 103807 / OttBd1)).